Here is a 508-residue protein sequence, read N- to C-terminus: Amphoterin-induced protein 3 (508 aa).

The first 19 residues, 1 to 19 (MAWLVLLGLLLCMLGAGSG), serve as a signal peptide directing secretion. The Extracellular segment spans residues 20–383 (TSDLEGVLPP…PRPEPEAFNT (364 aa)). In terms of domain architecture, LRRNT spans 25-61 (GVLPPDPHNCPNKCVCAADVLSCAGRGLQDLPAALPA). Disulfide bonds link C34/C40 and C38/C47. LRR repeat units follow at residues 62 to 83 (TAAE…WLAP), 86 to 107 (RLRA…VFTN), 110 to 131 (GLRI…DLDG), 134 to 155 (ELEK…AFQG), 158 to 178 (MLSH…NHLH), and 184 to 207 (RLRT…AALP). Residue N107 is glycosylated (N-linked (GlcNAc...) asparagine). The LRRCT domain occupies 219 to 275 (NPLPCDCSLYHLLRRWHQRGLSALHDFEREYTCLAFKVAESRVRFFEHSRVFKNCSV). 3 disulfides stabilise this stretch: C223–C251, C225–C273, and C300–C352. N272, N301, N362, and N368 each carry an N-linked (GlcNAc...) asparagine glycan. An Ig-like C2-type domain is found at 279–370 (PGLELPEEEL…HNQTLEYNVS (92 aa)). Residues 384-404 (GFTTLLGCIVGLVLVLLYLFA) form a helical membrane-spanning segment. Residues 405 to 508 (PPCRGCCRCC…STGSEGLMMS (104 aa)) lie on the Cytoplasmic side of the membrane.

It belongs to the immunoglobulin superfamily. AMIGO family. In terms of assembly, binds AMIGO1 or AMIGO2.

It is found in the membrane. Functionally, may mediate heterophilic cell-cell interaction. May contribute to signal transduction through its intracellular domain. In Rattus norvegicus (Rat), this protein is Amphoterin-induced protein 3.